Here is a 495-residue protein sequence, read N- to C-terminus: MAKCNAVAGFNALNGVQLNLFTTDELKAIHYATMEVLMDPGIQVSDPEARQIFKENGCEVNEQTNVVKIPEYLVRRALQLAPSRFVLWGRDKKYNTVQEAGGKVHWTCFGTGVKMCKYQEGKYVTVDSVEQDIADIAKLCDWAENIDYFSLPVSARDIAGQGAQDVHETFTPLTNTAKHFHHIDPVGENVEYYRDIVNAYYGGDEEEARKKPIFSMLLCPTSPLELSVNACQVIIKGARFGMPVNVLSMAMSGGSSPVYLAGTLVTHNAEVLAGITLAQLTVPGAKVWYGSSTTTFDLKKGTAPVGSPELGLISASVAKLAQFYGLPAFVAGTOSDAKIPDNQAGHEKTMTCLLPALAGANTLYGAGMLELGMTFSMEQLVIDNDIIKMTKKALQGVPVNEETLAVESIQKVGIGNNFLALKQTRQLVNYPSDPMLIDRRMFGDWAAAGSKDLAAAAHEKVVDVLKNHVVKPIDADILKDMKAVVDKADKAFRGM.

A non-standard amino acid (pyrrolysine) is located at residue Pyl-334.

Belongs to the trimethylamine methyltransferase family. As to quaternary structure, can form a complex with MttC.

The enzyme catalyses Co(I)-[trimethylamine-specific corrinoid protein] + trimethylamine + H(+) = methyl-Co(III)-[trimethylamine-specific corrinoid protein] + dimethylamine. It participates in one-carbon metabolism; methanogenesis from trimethylamine. Functionally, catalyzes the transfer of a methyl group from trimethylamine to the corrinoid cofactor of MttC. This Methanosarcina mazei (strain ATCC BAA-159 / DSM 3647 / Goe1 / Go1 / JCM 11833 / OCM 88) (Methanosarcina frisia) protein is Trimethylamine methyltransferase MttB1 (mttB1).